Consider the following 204-residue polypeptide: Somatotropin (204 aa).

A signal peptide spans 1–17 (MDRVVLMLSVLSLGVSS). Position 18 is a pyrrolidone carboxylic acid (glutamine 18). Residue histidine 36 coordinates Zn(2+). Cysteine 69 and cysteine 177 are oxidised to a cystine. Glutamate 186 serves as a coordination point for Zn(2+). A disulfide bond links cysteine 194 and cysteine 202.

This sequence belongs to the somatotropin/prolactin family.

The protein resides in the secreted. Functionally, growth hormone plays an important role in growth control and is involved in the regulation of several anabolic processes. Implicated as an osmoregulatory substance important for seawater adaptation. The protein is Somatotropin (gh) of Acanthopagrus butcheri (Australian black bream).